We begin with the raw amino-acid sequence, 205 residues long: Ribosomal RNA small subunit methyltransferase G (205 aa).

S-adenosyl-L-methionine-binding positions include Gly-73, Leu-78, 124–125 (VE), and Arg-138.

This sequence belongs to the methyltransferase superfamily. RNA methyltransferase RsmG family.

It localises to the cytoplasm. It carries out the reaction guanosine(527) in 16S rRNA + S-adenosyl-L-methionine = N(7)-methylguanosine(527) in 16S rRNA + S-adenosyl-L-homocysteine. Functionally, specifically methylates the N7 position of guanine in position 527 of 16S rRNA. This Actinobacillus pleuropneumoniae serotype 7 (strain AP76) protein is Ribosomal RNA small subunit methyltransferase G.